We begin with the raw amino-acid sequence, 125 residues long: Outer membrane protein assembly factor BamE (125 aa).

Positions M1 to A17 are cleaved as a signal peptide. C18 is lipidated: N-palmitoyl cysteine. A lipid anchor (S-diacylglycerol cysteine) is attached at C18.

It belongs to the BamE family. As to quaternary structure, part of the Bam complex.

The protein resides in the cell outer membrane. In terms of biological role, part of the outer membrane protein assembly complex, which is involved in assembly and insertion of beta-barrel proteins into the outer membrane. This is Outer membrane protein assembly factor BamE from Neisseria meningitidis serogroup B (strain ATCC BAA-335 / MC58).